A 525-amino-acid polypeptide reads, in one-letter code: Neuropilin and tolloid-like protein 2 (525 aa).

A signal peptide spans 1–22; it reads MALEQLCAVLKVLLITVLVVEG. Topologically, residues 23–347 are extracellular; sequence IAVAQKTQDG…GLFEQITKTH (325 aa). 7 disulfide bridges follow: cysteine 45-cysteine 72, cysteine 100-cysteine 122, cysteine 177-cysteine 207, cysteine 234-cysteine 256, cysteine 297-cysteine 309, cysteine 304-cysteine 322, and cysteine 316-cysteine 331. CUB domains are found at residues 45 to 159 and 177 to 292; these read CGIW…YSFI and CQFE…FTSF. One can recognise an LDL-receptor class A domain in the interval 296 to 332; that stretch reads PCTSSTFFCHSNMCINNSLVCNGVQNCAYPWDENHCK. Asparagine 311 is a glycosylation site (N-linked (GlcNAc...) asparagine). Residues 348–368 traverse the membrane as a helical segment; that stretch reads GTIIGITSGIVLVLLIISILV. Over 369–525 the chain is Cytoplasmic; sequence QVKQPRKKVM…SAQASISIDF (157 aa). The residue at position 409 (serine 409) is a Phosphoserine.

In terms of assembly, interacts with GRIK2 and GRIK3, but neither with AMPA-nor with NMDA-sensitive glutamate receptors. N-glycosylated. Expressed in brain tissues, including cerebellar granule cells (at protein level).

Its subcellular location is the cell membrane. Its function is as follows. Accessory subunit of neuronal kainate-sensitive glutamate receptors, GRIK2 and GRIK3. Increases kainate-receptor channel activity, slowing the decay kinetics of the receptors, without affecting their expression at the cell surface, and increasing the open probability of the receptor channels. Modulates the agonist sensitivity of kainate receptors. Slows the decay of kainate receptor-mediated excitatory postsynaptic currents (EPSCs), thus directly influencing synaptic transmission. The polypeptide is Neuropilin and tolloid-like protein 2 (Neto2) (Mus musculus (Mouse)).